Consider the following 471-residue polypeptide: NADH-quinone oxidoreductase subunit N (471 aa).

Helical transmembrane passes span 6–26 (FILP…LGVY), 30–50 (SSNI…ILIF), 70–90 (LSSF…SIST), 98–118 (IFLI…MVMI), 123–143 (LMVF…LASF), 158–178 (FVLS…VYGF), 198–218 (LTFG…AVPF), 230–250 (PTAV…TVFI), 264–284 (WQPI…IAAI), 292–312 (LIAY…STGS), 320–340 (IVYM…LLML), 365–385 (LSLL…GFFA), 400–420 (FLAI…LKII), and 438–458 (IWLK…FIFP).

The protein belongs to the complex I subunit 2 family. As to quaternary structure, NDH-1 is composed of 14 different subunits. Subunits NuoA, H, J, K, L, M, N constitute the membrane sector of the complex.

The protein localises to the cell inner membrane. It catalyses the reaction a quinone + NADH + 5 H(+)(in) = a quinol + NAD(+) + 4 H(+)(out). Functionally, NDH-1 shuttles electrons from NADH, via FMN and iron-sulfur (Fe-S) centers, to quinones in the respiratory chain. The immediate electron acceptor for the enzyme in this species is believed to be ubiquinone. Couples the redox reaction to proton translocation (for every two electrons transferred, four hydrogen ions are translocated across the cytoplasmic membrane), and thus conserves the redox energy in a proton gradient. This chain is NADH-quinone oxidoreductase subunit N, found in Pelagibacter ubique (strain HTCC1062).